The chain runs to 620 residues: MPLLQIAEPGQSSAPHQHRIAIGIDLGTTHSLAATVLSGKPKVLNDVQNRRLLPSIVHYGDNTTHYGEEAKPFIIADPKNTIVSVKRFMGRSKADIKFQHPYELVGSEKNEMPAFETRAGRKTPVEISAEILKQLKDRAEDSLQNPVNGAVITVPAYFDEAQRQATRYAAQLAGLNILRLLNEPTAAAVAYGLDQESNLATDRNYVIYDLGGGTFDVSILRFSQGVFEVLATGGHTALGGDDLDRLIVKWAKKQLNIDVLSDEDYAVFIVAARQAKEQLSTQDSVELKLLEATLTLDRPTFESIIQVALDKTISVCKRVLRDAKLELTDIQNVVLVGGSTRSYAVQKAVREVFAQEPLCTINPDEVVAIGASITANQLIGNSQDGSLLLDVTPLSLGLETMGGLVERLISRNTAIPVARRQEFTTYQDGQTAMLIHVVQGERDLVEHCRSLGRFVLHGIPPMTAGQARIEVTFQVDADGLLTVSAREATSGVQAHIDIKPSYGLSEADTERLLIEGFQHAEEDKNLRHLKETKVEAERELEALEQALKVDADLLDEKQLEALNSAKESLKAQLEGSDIQAIEQAVQQLKVHSDAFAALRMNRHIDHALKGTKLDDWSKSN.

This sequence belongs to the heat shock protein 70 family.

In terms of biological role, chaperone involved in the maturation of iron-sulfur cluster-containing proteins. Has a low intrinsic ATPase activity which is markedly stimulated by HscB. This Acinetobacter baumannii (strain SDF) protein is Chaperone protein HscA homolog.